We begin with the raw amino-acid sequence, 274 residues long: UPF0173 metal-dependent hydrolase A2cp1_1196 (274 aa).

This sequence belongs to the UPF0173 family.

The chain is UPF0173 metal-dependent hydrolase A2cp1_1196 from Anaeromyxobacter dehalogenans (strain 2CP-1 / ATCC BAA-258).